A 73-amino-acid chain; its full sequence is Large ribosomal subunit protein bL31 (73 aa).

Belongs to the bacterial ribosomal protein bL31 family. Type A subfamily. As to quaternary structure, part of the 50S ribosomal subunit.

Functionally, binds the 23S rRNA. The polypeptide is Large ribosomal subunit protein bL31 (Sinorhizobium fredii (strain NBRC 101917 / NGR234)).